The following is an 845-amino-acid chain: Translation initiation factor IF-2 (845 aa).

Disordered regions lie at residues 44 to 91 and 119 to 256; these read KRRK…NLSS and ARRA…NQEP. Basic and acidic residues predominate over residues 119–129; the sequence is ARRAKEREESL. The span at 139–148 shows a compositional bias: acidic residues; it reads DETPQEEEEP. Residues 156–165 are compositionally biased toward polar residues; sequence SLSPAQSQIE. 2 stretches are compositionally biased toward basic and acidic residues: residues 179–194 and 202–217; these read IEKRKADETKEDDRNS and SEVRAPKVLKGADEKR. Residues 343–510 enclose the tr-type G domain; it reads LRPPVVTIMG…AILLQAEILD (168 aa). The G1 stretch occupies residues 352 to 359; the sequence is GHVDHGKT. 352-359 is a binding site for GTP; it reads GHVDHGKT. Positions 377–381 are G2; that stretch reads GITQH. The tract at residues 398–401 is G3; that stretch reads DTPG. GTP is bound by residues 398–402 and 452–455; these read DTPGH and NKID. The G4 stretch occupies residues 452–455; sequence NKID. Positions 488–490 are G5; it reads SAK.

Belongs to the TRAFAC class translation factor GTPase superfamily. Classic translation factor GTPase family. IF-2 subfamily.

The protein localises to the cytoplasm. Functionally, one of the essential components for the initiation of protein synthesis. Protects formylmethionyl-tRNA from spontaneous hydrolysis and promotes its binding to the 30S ribosomal subunits. Also involved in the hydrolysis of GTP during the formation of the 70S ribosomal complex. The polypeptide is Translation initiation factor IF-2 (Bartonella henselae (strain ATCC 49882 / DSM 28221 / CCUG 30454 / Houston 1) (Rochalimaea henselae)).